Here is a 236-residue protein sequence, read N- to C-terminus: Purine nucleoside phosphorylase DeoD-type (236 aa).

An a purine D-ribonucleoside-binding site is contributed by histidine 5. Residues glycine 21, arginine 25, arginine 44, and 88–91 (RVGT) contribute to the phosphate site. Residues 180–182 (DME) and 204–205 (SD) contribute to the a purine D-ribonucleoside site. The Proton donor role is filled by aspartate 205.

This sequence belongs to the PNP/UDP phosphorylase family. Homohexamer; trimer of homodimers.

The enzyme catalyses a purine D-ribonucleoside + phosphate = a purine nucleobase + alpha-D-ribose 1-phosphate. The catalysed reaction is a purine 2'-deoxy-D-ribonucleoside + phosphate = a purine nucleobase + 2-deoxy-alpha-D-ribose 1-phosphate. Its function is as follows. Catalyzes the reversible phosphorolytic breakdown of the N-glycosidic bond in the beta-(deoxy)ribonucleoside molecules, with the formation of the corresponding free purine bases and pentose-1-phosphate. This is Purine nucleoside phosphorylase DeoD-type from Buchnera aphidicola subsp. Schizaphis graminum (strain Sg).